We begin with the raw amino-acid sequence, 178 residues long: Adenine phosphoribosyltransferase (178 aa).

Belongs to the purine/pyrimidine phosphoribosyltransferase family. As to quaternary structure, homodimer.

Its subcellular location is the cytoplasm. It carries out the reaction AMP + diphosphate = 5-phospho-alpha-D-ribose 1-diphosphate + adenine. Its pathway is purine metabolism; AMP biosynthesis via salvage pathway; AMP from adenine: step 1/1. Catalyzes a salvage reaction resulting in the formation of AMP, that is energically less costly than de novo synthesis. The protein is Adenine phosphoribosyltransferase of Erythrobacter litoralis (strain HTCC2594).